A 397-amino-acid chain; its full sequence is Mannonate dehydratase (397 aa).

The protein belongs to the mannonate dehydratase family. It depends on Fe(2+) as a cofactor. The cofactor is Mn(2+).

The catalysed reaction is D-mannonate = 2-dehydro-3-deoxy-D-gluconate + H2O. Its pathway is carbohydrate metabolism; pentose and glucuronate interconversion. Functionally, catalyzes the dehydration of D-mannonate. The polypeptide is Mannonate dehydratase (Yersinia pestis bv. Antiqua (strain Angola)).